Here is a 365-residue protein sequence, read N- to C-terminus: Succinyl-diaminopimelate desuccinylase (365 aa).

Residue H64 participates in Zn(2+) binding. Residue D66 is part of the active site. Zn(2+) is bound at residue D95. E125 acts as the Proton acceptor in catalysis. 3 residues coordinate Zn(2+): E126, E154, and H339.

This sequence belongs to the peptidase M20A family. DapE subfamily. In terms of assembly, homodimer. The cofactor is Zn(2+). Co(2+) serves as cofactor.

The catalysed reaction is N-succinyl-(2S,6S)-2,6-diaminopimelate + H2O = (2S,6S)-2,6-diaminopimelate + succinate. Its pathway is amino-acid biosynthesis; L-lysine biosynthesis via DAP pathway; LL-2,6-diaminopimelate from (S)-tetrahydrodipicolinate (succinylase route): step 3/3. In terms of biological role, catalyzes the hydrolysis of N-succinyl-L,L-diaminopimelic acid (SDAP), forming succinate and LL-2,6-diaminopimelate (DAP), an intermediate involved in the bacterial biosynthesis of lysine and meso-diaminopimelic acid, an essential component of bacterial cell walls. The sequence is that of Succinyl-diaminopimelate desuccinylase from Sulfurimonas denitrificans (strain ATCC 33889 / DSM 1251) (Thiomicrospira denitrificans (strain ATCC 33889 / DSM 1251)).